Here is a 147-residue protein sequence, read N- to C-terminus: Hemoglobin subunit gamma (147 aa).

The Globin domain maps to 3-147 (HFTAEEKAAI…VATALAHKYH (145 aa)). The heme b site is built by His-64 and His-93.

The protein belongs to the globin family. In terms of assembly, heterotetramer of two alpha chains and two gamma chains. In terms of tissue distribution, red blood cells.

Functionally, this protein functions as an embryonic globin, but the gene structure and chromosomal location resemble more closely the human gamma chain gene, which codes for a fetal globin. In Oryctolagus cuniculus (Rabbit), this protein is Hemoglobin subunit gamma (HBG).